Consider the following 180-residue polypeptide: Ribosome rescue factor SmrB (180 aa).

In terms of domain architecture, Smr spans Leu-98–Glu-173.

This sequence belongs to the SmrB family. As to quaternary structure, associates with collided ribosomes, but not with correctly translating polysomes.

Functionally, acts as a ribosome collision sensor. Detects stalled/collided disomes (pairs of ribosomes where the leading ribosome is stalled and a second ribosome has collided with it) and endonucleolytically cleaves mRNA at the 5' boundary of the stalled ribosome. Stalled/collided disomes form a new interface (primarily via the 30S subunits) that binds SmrB. Cleaved mRNA becomes available for tmRNA ligation, leading to ribosomal subunit dissociation and rescue of stalled ribosomes. This is Ribosome rescue factor SmrB from Proteus mirabilis (strain HI4320).